The sequence spans 545 residues: G-protein coupled receptor 161 (545 aa).

At 1–46 (MDFVQHALLTASRGALTMSLNSSLSYRKELSNLTATEGGEGGAVSE) the chain is on the extracellular side. Asparagine 21 and asparagine 32 each carry an N-linked (GlcNAc...) asparagine glycan. Residues 47–67 (FIAIIIITVLVCLGNLVIVVT) traverse the membrane as a helical segment. Over 68 to 80 (LYKKSYLLTLSNK) the chain is Cytoplasmic. The chain crosses the membrane as a helical span at residues 81-101 (FVFSLTLSNFLLSVLVLPFVV). Over 102 to 117 (TSSIRREWIFGVVWCN) the chain is Extracellular. Cysteine 116 and cysteine 194 form a disulfide bridge. N-linked (GlcNAc...) asparagine glycosylation occurs at asparagine 117. A helical membrane pass occupies residues 118–139 (FSALLYLLISSASMLTLGVIAI). The Cytoplasmic segment spans residues 140–159 (DRYYAVLYPMVYPMKITGNR). Residues 160-180 (AVMALVYIWLHSLIGCLPPLF) traverse the membrane as a helical segment. Topologically, residues 181 to 205 (GWSSVEFDEFKWMCVAAWHQEPGYT) are extracellular. The helical transmembrane segment at 206-226 (IFWQIWCALFPFLIMLVCYGF) threads the bilayer. Residues 227 to 285 (IFRVARVKARKVHCGTVVTVEEDSQRSGRKNSSTSTSSSGSRRNALQGVVYSANQCKAL) are Cytoplasmic-facing. The helical transmembrane segment at 286 to 306 (ITILVVIGAFMVTWGPYMVVI) threads the bilayer. The Extracellular portion of the chain corresponds to 307–322 (TSEALWGKNCVSPTLE). A helical transmembrane segment spans residues 323-343 (TWATWLSFTSAICHPLIYGLW). At 344–545 (NKTVRKELLG…EGNVLAAEQR (202 aa)) the chain is on the cytoplasmic side.

It belongs to the G-protein coupled receptor 1 family.

The protein localises to the cell projection. Its subcellular location is the cilium membrane. It localises to the cell membrane. Its function is as follows. Key negative regulator of Shh signaling, which promotes the processing of GLI3 into GLI3R during neural tube development. Recruited by TULP3 and the IFT-A complex to primary cilia and acts as a regulator of the PKA-dependent basal repression machinery in Shh signaling by increasing cAMP levels, leading to promote the PKA-dependent processing of GLI3 into GLI3R and repress the Shh signaling. In presence of SHH, it is removed from primary cilia and is internalized into recycling endosomes, preventing its activity and allowing activation of the Shh signaling. Its ligand is unknown. The polypeptide is G-protein coupled receptor 161 (Gpr161) (Mus musculus (Mouse)).